A 548-amino-acid polypeptide reads, in one-letter code: Chaperonin GroEL (548 aa).

Residues 30-33 (TLGP), Lys51, 87-91 (DGTTT), Gly415, and Asp495 contribute to the ATP site.

The protein belongs to the chaperonin (HSP60) family. As to quaternary structure, forms a cylinder of 14 subunits composed of two heptameric rings stacked back-to-back. Interacts with the co-chaperonin GroES.

The protein localises to the cytoplasm. It carries out the reaction ATP + H2O + a folded polypeptide = ADP + phosphate + an unfolded polypeptide.. Functionally, together with its co-chaperonin GroES, plays an essential role in assisting protein folding. The GroEL-GroES system forms a nano-cage that allows encapsulation of the non-native substrate proteins and provides a physical environment optimized to promote and accelerate protein folding. The protein is Chaperonin GroEL of Pseudoalteromonas atlantica (strain T6c / ATCC BAA-1087).